We begin with the raw amino-acid sequence, 258 residues long: Imidazole glycerol phosphate synthase subunit HisF (258 aa).

Active-site residues include aspartate 11 and aspartate 130.

This sequence belongs to the HisA/HisF family. In terms of assembly, heterodimer of HisH and HisF.

It is found in the cytoplasm. It catalyses the reaction 5-[(5-phospho-1-deoxy-D-ribulos-1-ylimino)methylamino]-1-(5-phospho-beta-D-ribosyl)imidazole-4-carboxamide + L-glutamine = D-erythro-1-(imidazol-4-yl)glycerol 3-phosphate + 5-amino-1-(5-phospho-beta-D-ribosyl)imidazole-4-carboxamide + L-glutamate + H(+). It functions in the pathway amino-acid biosynthesis; L-histidine biosynthesis; L-histidine from 5-phospho-alpha-D-ribose 1-diphosphate: step 5/9. Functionally, IGPS catalyzes the conversion of PRFAR and glutamine to IGP, AICAR and glutamate. The HisF subunit catalyzes the cyclization activity that produces IGP and AICAR from PRFAR using the ammonia provided by the HisH subunit. The polypeptide is Imidazole glycerol phosphate synthase subunit HisF (Klebsiella pneumoniae (strain 342)).